The chain runs to 449 residues: RNA binding protein fox-1 homolog 2 (449 aa).

The segment covering 1–21 has biased composition (low complexity); that stretch reads MAEGGQAQQQPPQLGPGAAAR. A disordered region spans residues 1-186; the sequence is MAEGGQAQQQ…STPKRLHVSN (186 aa). Composition is skewed to polar residues over residues 77–86 and 118–138; these read QGNQEPTTTP and YAGQTSEHNLTLYGSTQPHGE. Positions 139–176 are enriched in low complexity; the sequence is QSSNSPSNQNGSLTQTEGGAQTDGQQSQTQSSENSESK. Residues 180–256 form the RRM domain; sequence KRLHVSNIPF…RKIEVNNATA (77 aa). R236, G241, Y268, and K273 each carry omega-N-methylarginine. Asymmetric dimethylarginine occurs at positions 285 and 317. 5 positions are modified to omega-N-methylarginine: L318, L323, A336, R340, and G341. 2 positions are modified to asymmetric dimethylarginine: R356 and R388. An asymmetric dimethylarginine; alternate mark is found at R440 and R445. Residues R440 and R445 each carry the omega-N-methylarginine; alternate modification.

Interacts with ER-alpha N-terminal activation domain. Interacts with RBPMS; the interaction allows cooperative assembly of stable cell-specific alternative splicing regulatory complexes. In terms of tissue distribution, detected in brain neurons (at protein level). Detected in heart, brain, embryo, lung, liver, kidney and ovary.

It localises to the nucleus. It is found in the cytoplasm. RNA-binding protein that regulates alternative splicing events by binding to 5'-UGCAUGU-3' elements. Prevents binding of U2AF2 to the 3'-splice site. Regulates alternative splicing of tissue-specific exons and of differentially spliced exons during erythropoiesis. Seems to act as a coregulatory factor of ER-alpha. Together with RNA binding proteins RBPMS and MBNL1/2, activates vascular smooth muscle cells alternative splicing events. The polypeptide is RNA binding protein fox-1 homolog 2 (Rbfox2) (Mus musculus (Mouse)).